The primary structure comprises 275 residues: Formamidopyrimidine-DNA glycosylase (275 aa).

The active-site Schiff-base intermediate with DNA is the proline 2. Glutamate 3 acts as the Proton donor in catalysis. Lysine 58 functions as the Proton donor; for beta-elimination activity in the catalytic mechanism. DNA contacts are provided by histidine 91 and arginine 110. Residues glutamine 238–lysine 272 form an FPG-type zinc finger. The Proton donor; for delta-elimination activity role is filled by arginine 262.

Belongs to the FPG family. In terms of assembly, monomer. Zn(2+) serves as cofactor.

The enzyme catalyses Hydrolysis of DNA containing ring-opened 7-methylguanine residues, releasing 2,6-diamino-4-hydroxy-5-(N-methyl)formamidopyrimidine.. It carries out the reaction 2'-deoxyribonucleotide-(2'-deoxyribose 5'-phosphate)-2'-deoxyribonucleotide-DNA = a 3'-end 2'-deoxyribonucleotide-(2,3-dehydro-2,3-deoxyribose 5'-phosphate)-DNA + a 5'-end 5'-phospho-2'-deoxyribonucleoside-DNA + H(+). Its function is as follows. Involved in base excision repair of DNA damaged by oxidation or by mutagenic agents. Acts as a DNA glycosylase that recognizes and removes damaged bases. Has a preference for oxidized purines, such as 7,8-dihydro-8-oxoguanine (8-oxoG). Has AP (apurinic/apyrimidinic) lyase activity and introduces nicks in the DNA strand. Cleaves the DNA backbone by beta-delta elimination to generate a single-strand break at the site of the removed base with both 3'- and 5'-phosphates. This is Formamidopyrimidine-DNA glycosylase from Streptococcus pyogenes serotype M28 (strain MGAS6180).